The following is a 196-amino-acid chain: CRISPR-associated exonuclease Cas4 (196 aa).

Cys23 lines the [4Fe-4S] cluster pocket. Positions 50, 90, and 103 each coordinate Mn(2+). Positions 184, 187, and 193 each coordinate [4Fe-4S] cluster.

The protein belongs to the CRISPR-associated exonuclease Cas4 family. Mg(2+) serves as cofactor. The cofactor is [4Fe-4S] cluster.

It carries out the reaction exonucleolytic cleavage in the 5'- to 3'-direction to yield nucleoside 3'-phosphates.. CRISPR (clustered regularly interspaced short palindromic repeat) is an adaptive immune system that provides protection against mobile genetic elements (viruses, transposable elements and conjugative plasmids). CRISPR clusters contain sequences complementary to antecedent mobile elements and target invading nucleic acids. CRISPR clusters are transcribed and processed into CRISPR RNA (crRNA). This may be a 5' to 3' ssDNA exonuclease. The sequence is that of CRISPR-associated exonuclease Cas4 from Francisella tularensis subsp. novicida (strain U112).